We begin with the raw amino-acid sequence, 160 residues long: Probable small nuclear ribonucleoprotein-associated protein B (160 aa).

Residues 4–86 enclose the Sm domain; that stretch reads SKNNKMMAHL…IVSMTVDGPP (83 aa). The tract at residues 80-160 is disordered; it reads MTVDGPPPRD…YGGPPGGRPF (81 aa). 3 stretches are compositionally biased toward gly residues: residues 99-113, 128-143, and 150-160; these read GGAG…GGRG, APGG…GGPG, and GYGGPPGGRPF.

The protein belongs to the snRNP SmB/SmN family.

Its subcellular location is the nucleus. It localises to the cytoplasm. The protein resides in the cytosol. In terms of biological role, plays a role in pre-mRNA splicing as a core component of the spliceosomal U1, U2, U4 and U5 small nuclear ribonucleoproteins (snRNPs), the building blocks of the spliceosome. This chain is Probable small nuclear ribonucleoprotein-associated protein B (snr-2), found in Caenorhabditis elegans.